The primary structure comprises 440 residues: Chromosome partition protein MukF (440 aa).

The tract at residues 208-236 is leucine-zipper; the sequence is LDETSGNLRELQDTLNAAGDKLQSQLLRI.

Belongs to the MukF family. As to quaternary structure, interacts, and probably forms a ternary complex, with MukE and MukB via its C-terminal region. The complex formation is stimulated by calcium or magnesium. It is required for an interaction between MukE and MukB.

It localises to the cytoplasm. It is found in the nucleoid. Functionally, involved in chromosome condensation, segregation and cell cycle progression. May participate in facilitating chromosome segregation by condensation DNA from both sides of a centrally located replisome during cell division. Not required for mini-F plasmid partitioning. Probably acts via its interaction with MukB and MukE. Overexpression results in anucleate cells. It has a calcium binding activity. This chain is Chromosome partition protein MukF, found in Histophilus somni (strain 2336) (Haemophilus somnus).